The primary structure comprises 207 residues: Ribosomal RNA small subunit methyltransferase G (207 aa).

Residues Gly-73, Leu-78, 124–125 (VE), and Arg-139 each bind S-adenosyl-L-methionine.

The protein belongs to the methyltransferase superfamily. RNA methyltransferase RsmG family.

The protein localises to the cytoplasm. The catalysed reaction is guanosine(527) in 16S rRNA + S-adenosyl-L-methionine = N(7)-methylguanosine(527) in 16S rRNA + S-adenosyl-L-homocysteine. Functionally, specifically methylates the N7 position of guanine in position 527 of 16S rRNA. The sequence is that of Ribosomal RNA small subunit methyltransferase G from Shigella dysenteriae serotype 1 (strain Sd197).